The chain runs to 351 residues: DNA polymerase IV (351 aa).

The UmuC domain maps to 4–185; sequence IIHVDMDCFF…LPLAKIPGVG (182 aa). Mg(2+)-binding residues include Asp8 and Asp103. The active site involves Glu104.

The protein belongs to the DNA polymerase type-Y family. Monomer. Mg(2+) is required as a cofactor.

It localises to the cytoplasm. It carries out the reaction DNA(n) + a 2'-deoxyribonucleoside 5'-triphosphate = DNA(n+1) + diphosphate. Functionally, poorly processive, error-prone DNA polymerase involved in untargeted mutagenesis. Copies undamaged DNA at stalled replication forks, which arise in vivo from mismatched or misaligned primer ends. These misaligned primers can be extended by PolIV. Exhibits no 3'-5' exonuclease (proofreading) activity. May be involved in translesional synthesis, in conjunction with the beta clamp from PolIII. The sequence is that of DNA polymerase IV from Shigella dysenteriae serotype 1 (strain Sd197).